The primary structure comprises 209 residues: Probable transcriptional regulator ycf29 (209 aa).

In terms of domain architecture, Response regulatory spans 4–120 (NLMLVENDTV…ELVSLIKNLI (117 aa)). At aspartate 53 the chain carries 4-aspartylphosphate. The 66-residue stretch at 139–204 (PLFQLLYLTP…LLVKYSIKNN (66 aa)) folds into the HTH luxR-type domain.

Its subcellular location is the plastid. The protein resides in the chloroplast. This chain is Probable transcriptional regulator ycf29 (ycf29), found in Porphyra purpurea (Red seaweed).